The primary structure comprises 820 residues: Protein bicaudal D homolog 2 (820 aa).

Ser-2 is modified (N-acetylserine). Residues 20–270 (EWLRAEVKRL…LSHYMSINDS (251 aa)) adopt a coiled-coil conformation. The interval 25 to 400 (EVKRLSHELA…RLTENLSALR (376 aa)) is interaction with DYNLL1, DYNC1H1, DYNC1I2, DCTN1 and DCTN2. Phosphoserine occurs at positions 190, 224, and 320. A disordered region spans residues 313–332 (SSLDNKTSTPRKDGLAPPSP). Thr-321 bears the Phosphothreonine mark. The interval 336–595 (SDLLSELHIS…LLATEVGRAD (260 aa)) is interaction with KIF5A. A coiled-coil region spans residues 340–539 (SELHISEIQK…VTFSEELANL (200 aa)). A phosphoserine mark is found at Ser-345 and Ser-397. Disordered stretches follow at residues 400–427 (RRLQ…GDYY), 563–582 (QGKA…PVLL), 591–618 (VGRA…DPRR), and 799–820 (HEQT…SPSL). The span at 404-424 (AGKERQTSLDNEKDRDSHEDG) shows a compositional bias: basic and acidic residues. 2 positions are modified to phosphoserine: Ser-570 and Ser-578. The segment at 586–820 (LLATEVGRAD…SKAKPASPSL (235 aa)) is interaction with RANBP2. Position 598 is a phosphothreonine (Thr-598). Low complexity predominate over residues 602-614 (SPSPSSSLPSPLS). The stretch at 662–804 (DKDKEALMEE…LELDHEQTRR (143 aa)) forms a coiled coil. The interaction with RAB6A stretch occupies residues 662 to 810 (DKDKEALMEE…QTRRGRSKAA (149 aa)). Ser-819 bears the Phosphoserine mark.

Belongs to the BicD family. Part of a tripartite complex with dynein and dynactin, acts an adapter linking the dynein motor complex and dynactin. Interacts with CPNE4 (via VWFA domain). Interacts with NEK9. Interacts with DCTN2. Interacts with RAB6A. Interacts with DNAI1. Interacts with DYNLL1, DYNC1H1, DYNC1I2 and DCTN1. Forms a complex with dynein and dynactin. The dynein-dynactin-BICD2 ternary complex (DDB) binds preferentially to tyrosinated microtubules than to detyrosinated microtubules. Interacts with RANBP2, RAB6A and KIF5A. Interacts with KIF1C. In terms of processing, phosphorylated by NEK9 in vitro. As to expression, ubiquitously expressed with high expression in the spinal cord.

It is found in the golgi apparatus. Its subcellular location is the cytoplasm. It localises to the cytoskeleton. The protein resides in the nucleus. The protein localises to the nuclear pore complex. It is found in the nucleus envelope. Acts as an adapter protein linking the dynein motor complex to various cargos and converts dynein from a non-processive to a highly processive motor in the presence of dynactin. Facilitates and stabilizes the interaction between dynein and dynactin and activates dynein processivity (the ability to move along a microtubule for a long distance without falling off the track). Facilitates the binding of RAB6A to the Golgi by stabilizing its GTP-bound form. Regulates coat complex coatomer protein I (COPI)-independent Golgi-endoplasmic reticulum transport via its interaction with RAB6A and recruitment of the dynein-dynactin motor complex. Contributes to nuclear and centrosomal positioning prior to mitotic entry through regulation of both dynein and kinesin-1. During G2 phase of the cell cycle, associates with RANBP2 at the nuclear pores and recruits dynein and dynactin to the nuclear envelope to ensure proper positioning of the nucleus relative to centrosomes prior to the onset of mitosis. The sequence is that of Protein bicaudal D homolog 2 (Bicd2) from Mus musculus (Mouse).